Reading from the N-terminus, the 94-residue chain is Aspartyl/glutamyl-tRNA(Asn/Gln) amidotransferase subunit C (94 aa).

This sequence belongs to the GatC family. As to quaternary structure, heterotrimer of A, B and C subunits.

It catalyses the reaction L-glutamyl-tRNA(Gln) + L-glutamine + ATP + H2O = L-glutaminyl-tRNA(Gln) + L-glutamate + ADP + phosphate + H(+). The catalysed reaction is L-aspartyl-tRNA(Asn) + L-glutamine + ATP + H2O = L-asparaginyl-tRNA(Asn) + L-glutamate + ADP + phosphate + 2 H(+). Its function is as follows. Allows the formation of correctly charged Asn-tRNA(Asn) or Gln-tRNA(Gln) through the transamidation of misacylated Asp-tRNA(Asn) or Glu-tRNA(Gln) in organisms which lack either or both of asparaginyl-tRNA or glutaminyl-tRNA synthetases. The reaction takes place in the presence of glutamine and ATP through an activated phospho-Asp-tRNA(Asn) or phospho-Glu-tRNA(Gln). This is Aspartyl/glutamyl-tRNA(Asn/Gln) amidotransferase subunit C from Hydrogenobaculum sp. (strain Y04AAS1).